Consider the following 1588-residue polypeptide: Multicopy suppressor of chk1 protein 1 (1588 aa).

Positions 38–60 are disordered; that stretch reads HAKPSTQQQQQQQNISNETTSTG. Residues 51-60 show a composition bias toward polar residues; the sequence is NISNETTSTG. One can recognise a JmjN domain in the interval 82–124; sequence NVRVTPKKEEFSRGLDFISDLYDQTARKSGAVRVIPPDNWKCP. The PHD-type 1 zinc finger occupies 298 to 345; the sequence is KCKLCAQEGSSLVTCCICQSNYHYACVEAPFAPFSDIHYWTCNSCIPS. The span at 385–395 shows a compositional bias: polar residues; it reads PLTLPSNTKTP. A disordered region spans residues 385–412; sequence PLTLPSNTKTPPASARQSSRRTRSTSGK. The region spanning 475 to 645 is the JmjC domain; it reads FPTSRQNAYY…DMHAENSFNM (171 aa). The interval 848 to 872 is disordered; sequence EKRKPKRGSATHSHLESPSEEVEDL. Residues 1171–1220 form a PHD-type 2 zinc finger; it reads FHYCFCRQPEAGMMIECELCHEWYHAKCMKMSKKKLRADEKFICPICDYR. The disordered stretch occupies residues 1319 to 1341; sequence APQPPPFIGESRSNRKPRPTKRQ. The PHD-type 3 zinc finger occupies 1454–1505; that stretch reads SVICLCRQPFAISDGTVQCHNCLEWFHYECVGLSSDIVSTLSNYACPDCCSK.

It is found in the nucleus. In terms of biological role, has a role in regulating chromatin structure via global deacetylation of histone H3. This function is associated with the activity of a histone deacetylase. The chain is Multicopy suppressor of chk1 protein 1 (msc1) from Schizosaccharomyces pombe (strain 972 / ATCC 24843) (Fission yeast).